The primary structure comprises 433 residues: Transcription factor TCP18 (433 aa).

Disordered stretches follow at residues 130–163 (QRISTSQDPKMKKAKKPSRTDRHSKIKTAKGTRD) and 247–281 (DDRGSNTNTTETRGNKVDGRSMRGKRKRPEPRTPI). Residues 148-206 (RTDRHSKIKTAKGTRDRRMRLSLDVAKELFGLQDMLGFDKASKTVEWLLTQAKPEIIKI) enclose the TCP domain. A R domain is found at 287–304 (KEERAKARERAKGRTMEK).

In terms of tissue distribution, expressed in unelongated axillary buds, and, to a lower extent, in axillary structures such as flowers and siliques.

It is found in the nucleus. Transcription factor that prevents axillary bud outgrowth and delays early axillary bud development. Indirectly required for the auxin-induced control of apical dominance. The polypeptide is Transcription factor TCP18 (Arabidopsis thaliana (Mouse-ear cress)).